The primary structure comprises 340 residues: Uroporphyrinogen decarboxylase (340 aa).

Substrate-binding positions include 23–27, aspartate 72, tyrosine 147, threonine 202, and histidine 316; that span reads RQAGR.

It belongs to the uroporphyrinogen decarboxylase family. As to quaternary structure, homodimer.

It is found in the cytoplasm. It catalyses the reaction uroporphyrinogen III + 4 H(+) = coproporphyrinogen III + 4 CO2. It functions in the pathway porphyrin-containing compound metabolism; protoporphyrin-IX biosynthesis; coproporphyrinogen-III from 5-aminolevulinate: step 4/4. Catalyzes the decarboxylation of four acetate groups of uroporphyrinogen-III to yield coproporphyrinogen-III. The chain is Uroporphyrinogen decarboxylase from Geobacter metallireducens (strain ATCC 53774 / DSM 7210 / GS-15).